We begin with the raw amino-acid sequence, 48 residues long: ATP synthase protein 8 (48 aa).

Residues 12–32 traverse the membrane as a helical segment; sequence LLTGGILAISLLLYFVATYLL.

It belongs to the ATPase protein 8 family. F-type ATPases have 2 components, CF(1) - the catalytic core - and CF(0) - the membrane proton channel.

The protein resides in the mitochondrion membrane. Functionally, mitochondrial membrane ATP synthase (F(1)F(0) ATP synthase or Complex V) produces ATP from ADP in the presence of a proton gradient across the membrane which is generated by electron transport complexes of the respiratory chain. F-type ATPases consist of two structural domains, F(1) - containing the extramembraneous catalytic core and F(0) - containing the membrane proton channel, linked together by a central stalk and a peripheral stalk. During catalysis, ATP synthesis in the catalytic domain of F(1) is coupled via a rotary mechanism of the central stalk subunits to proton translocation. Part of the complex F(0) domain. Minor subunit located with subunit a in the membrane. The protein is ATP synthase protein 8 (ATP8) of Candida parapsilosis (Yeast).